The sequence spans 73 residues: Dermaseptin-1 (73 aa).

An N-terminal signal peptide occupies residues methionine 1–cysteine 22. The propeptide at glutamate 23–methionine 43 is removed in mature form. Residues glutamate 25–glycine 46 form a disordered region. Over residues glutamate 30 to glutamine 40 the composition is skewed to acidic residues. At leucine 70 the chain carries Leucine amide. Positions glutamate 72–glutamine 73 are cleaved as a propeptide — removed in mature form.

In terms of tissue distribution, expressed by the skin glands.

It localises to the secreted. In terms of biological role, has antiparasitic activity against trypomastigote form of T.cruzi (IC(50)=0.68 uM) in vitro but not against L.infantum. Probably acts by permeabilizing cell membranes. In vitro, shows no cytotoxicity against macrophages. Has antibacterial activity. In Pithecopus nordestinus (Northeastern Brazilian leaf frog), this protein is Dermaseptin-1.